We begin with the raw amino-acid sequence, 50 residues long: Large ribosomal subunit protein bL33 (50 aa).

It belongs to the bacterial ribosomal protein bL33 family.

This Mycoplasmopsis synoviae (strain 53) (Mycoplasma synoviae) protein is Large ribosomal subunit protein bL33.